We begin with the raw amino-acid sequence, 815 residues long: Patatin-like phospholipase domain-containing protein LELG_00944 (815 aa).

A compositionally biased stretch (polar residues) spans 41–50; sequence VSTTAPTTPL. Disordered regions lie at residues 41–105 and 140–166; these read VSTT…PQLK and SENL…STSP. A compositionally biased stretch (low complexity) spans 54–73; sequence LDMGDLSLLGGELGNGSDDV. Over residues 74–94 the composition is skewed to acidic residues; that stretch reads VVGDDDDDDDDDDDDDDDDDD. A compositionally biased stretch (basic residues) spans 148-160; that stretch reads KRTKFAKSSKSSK. Residues 185–205 traverse the membrane as a helical segment; it reads WPILTFVVIWVTILGFLYLAV. Positions 360–552 constitute a PNPLA domain; it reads LCLSGGACFA…RTDIPIDALN (193 aa). The GXSXG signature appears at 391–395; the sequence is GTSGG. Catalysis depends on Ser-393, which acts as the Nucleophile. Asp-539 (proton acceptor) is an active-site residue. The segment at 753-815 is disordered; it reads GSTLRDDDAD…LTKERRHTVY (63 aa). Over residues 759-799 the composition is skewed to acidic residues; it reads DDADADVDEDDNEDEDEEDEDENDYEEYDVEDLDDPYESDA.

The protein belongs to the PLPL family.

The protein resides in the membrane. Probable lipid hydrolase. This chain is Patatin-like phospholipase domain-containing protein LELG_00944, found in Lodderomyces elongisporus (strain ATCC 11503 / CBS 2605 / JCM 1781 / NBRC 1676 / NRRL YB-4239) (Yeast).